Here is a 152-residue protein sequence, read N- to C-terminus: Endoribonuclease YbeY (152 aa).

The Zn(2+) site is built by histidine 118, histidine 122, and histidine 128.

It belongs to the endoribonuclease YbeY family. Requires Zn(2+) as cofactor.

The protein localises to the cytoplasm. In terms of biological role, single strand-specific metallo-endoribonuclease involved in late-stage 70S ribosome quality control and in maturation of the 3' terminus of the 16S rRNA. The chain is Endoribonuclease YbeY from Pelotomaculum thermopropionicum (strain DSM 13744 / JCM 10971 / SI).